The primary structure comprises 270 residues: MGFWCRMLENQEQEEVITVRVQDPRVQNEGSWNSYVDYKIFLHTNSKAFTAKTSCVRRRYREFVWLRKQLQRNAGLVPVPELPGKSTFFGSSDEFIEKRRQGLQHFLEKVLQSVVLLSDSQLHLFLQSQLSVPEIEACVQGRSPVSVSDAILRYAMSNCGWAQEERRGSSHLAEGDQPKSCCFLPRPGRRSSPSPPPGEEKDPFEVWAPVVDSEAPPLESPTLPPTSSPSCCGFARPDEGLSASQPVRRVLGGGHAVPLDPGQLETVLEK.

A PX domain is found at 16 to 132 (VITVRVQDPR…HLFLQSQLSV (117 aa)). Positions 59, 85, and 99 each coordinate a 1,2-diacyl-sn-glycero-3-phospho-(1D-myo-inositol-3-phosphate). The interval 135–139 (IEACV) is important for membrane trafficking. Residues 168-177 (GSSHLAEGDQ) show a composition bias toward basic and acidic residues. Disordered stretches follow at residues 168-244 (GSSH…LSAS) and 251-270 (LGGGHAVPLDPGQLETVLEK). The span at 218–227 (LESPTLPPTS) shows a compositional bias: pro residues.

Belongs to the sorting nexin family. In terms of assembly, monomer. Interacts with TRPV3; this interaction promotes TRPV3 trafficking from the cell membrane to lysosome for degradation.

It is found in the cell membrane. The protein localises to the endosome. Its subcellular location is the cytoplasm. Phosphoinositide-binding protein involved in protein sorting and membrane trafficking in endosomes. Regulates the levels of TRPV3 by promoting its trafficking from the cell membrane to lysosome for degradation. This Bos taurus (Bovine) protein is Sorting nexin-11 (SNX11).